The chain runs to 162 residues: Sorting nexin-12 (162 aa).

Residues 1–20 (MSDTAVADTRRLNSKPQDLT) form a disordered region. At S2 the chain carries N-acetylserine. The residue at position 23 (Y23) is a Phosphotyrosine. Residues 28–152 (NFLEIDIFNP…HMFLQEEAID (125 aa)) form the PX domain. A 1,2-diacyl-sn-glycero-3-phospho-(1D-myo-inositol-3-phosphate) is bound by residues R71, S73, K96, and R119. S73 bears the Phosphoserine mark.

This sequence belongs to the sorting nexin family.

The protein resides in the membrane. Functionally, may be involved in several stages of intracellular trafficking. The chain is Sorting nexin-12 (SNX12) from Homo sapiens (Human).